The sequence spans 283 residues: UPF0273 protein STK_18300 (283 aa).

In terms of domain architecture, KaiC spans 4 to 249 (LRVRTYIPGF…YLRITNVKAE (246 aa)). 31-38 (GGPGTGKS) lines the ATP pocket. The interval 261–283 (MKKAVEESEEEKESIQEAEIEEE) is disordered. Residues 267 to 283 (ESEEEKESIQEAEIEEE) show a composition bias toward acidic residues.

This sequence belongs to the UPF0273 family.

The sequence is that of UPF0273 protein STK_18300 from Sulfurisphaera tokodaii (strain DSM 16993 / JCM 10545 / NBRC 100140 / 7) (Sulfolobus tokodaii).